Here is a 259-residue protein sequence, read N- to C-terminus: Snake venom serine protease homolog rhinocerase 3 (259 aa).

Positions 1–17 are cleaved as a signal peptide; it reads VLIRVLANLLLLQLSYA. Residues 18 to 23 constitute a propeptide that is removed on maturation; it reads QESSEL. The region spanning 24 to 250 is the Peptidase S1 domain; that stretch reads VIGGDECDIN…YTDWIEGIIA (227 aa). 6 disulfide bridges follow: Cys30-Cys164, Cys51-Cys67, Cys99-Cys257, Cys143-Cys211, Cys175-Cys190, and Cys201-Cys226. N-linked (GlcNAc...) asparagine glycosylation is present at Asn80. The N-linked (GlcNAc...) asparagine glycan is linked to Asn252.

The protein belongs to the peptidase S1 family. Snake venom subfamily. Expressed by the venom gland.

It is found in the secreted. Functionally, snake venom serine protease homolog that may act in the hemostasis system of the prey. The chain is Snake venom serine protease homolog rhinocerase 3 from Bitis rhinoceros (West African gaboon viper).